A 522-amino-acid chain; its full sequence is Glucans biosynthesis protein G (522 aa).

An N-terminal signal peptide occupies residues 1–33; it reads MPNNKFFVKSSKASLRWLGATVLLTLYALPSWA.

Belongs to the OpgD/OpgG family.

The protein localises to the periplasm. It participates in glycan metabolism; osmoregulated periplasmic glucan (OPG) biosynthesis. In terms of biological role, involved in the biosynthesis of osmoregulated periplasmic glucans (OPGs). This is Glucans biosynthesis protein G from Sodalis glossinidius (strain morsitans).